A 121-amino-acid chain; its full sequence is Large ribosomal subunit protein bL12 (121 aa).

The protein belongs to the bacterial ribosomal protein bL12 family. In terms of assembly, homodimer. Part of the ribosomal stalk of the 50S ribosomal subunit. Forms a multimeric L10(L12)X complex, where L10 forms an elongated spine to which 2 to 4 L12 dimers bind in a sequential fashion. Binds GTP-bound translation factors.

Forms part of the ribosomal stalk which helps the ribosome interact with GTP-bound translation factors. Is thus essential for accurate translation. The chain is Large ribosomal subunit protein bL12 from Pseudomonas fluorescens (strain ATCC BAA-477 / NRRL B-23932 / Pf-5).